The primary structure comprises 360 residues: Phospho-N-acetylmuramoyl-pentapeptide-transferase (360 aa).

10 consecutive transmembrane segments (helical) span residues 26–46, 72–92, 94–114, 132–152, 168–188, 199–219, 236–256, 263–283, 288–308, and 338–358; these read AIVSLLTALFISLWMGPRMIA, PTMGGIMILTSITVSVLLWAY, SNPYVWCVLFVLVGYGIVGFV, WKYFWQSAIALVVAFVMYMIG, VMPQLGLLYLLLAYFVIVGTS, GLAIMPTVFVAAGFALVAWAT, AGELVIVCTAIVGAGLGFLWF, VFMGDVGSLALGGALGTIAVL, FLLVIMGGVFVVETLSVILQV, and VIVRFWIISLMLVLIGLATLK.

Belongs to the glycosyltransferase 4 family. MraY subfamily. Mg(2+) serves as cofactor.

The protein localises to the cell inner membrane. It carries out the reaction UDP-N-acetyl-alpha-D-muramoyl-L-alanyl-gamma-D-glutamyl-meso-2,6-diaminopimeloyl-D-alanyl-D-alanine + di-trans,octa-cis-undecaprenyl phosphate = di-trans,octa-cis-undecaprenyl diphospho-N-acetyl-alpha-D-muramoyl-L-alanyl-D-glutamyl-meso-2,6-diaminopimeloyl-D-alanyl-D-alanine + UMP. The protein operates within cell wall biogenesis; peptidoglycan biosynthesis. In terms of biological role, catalyzes the initial step of the lipid cycle reactions in the biosynthesis of the cell wall peptidoglycan: transfers peptidoglycan precursor phospho-MurNAc-pentapeptide from UDP-MurNAc-pentapeptide onto the lipid carrier undecaprenyl phosphate, yielding undecaprenyl-pyrophosphoryl-MurNAc-pentapeptide, known as lipid I. This is Phospho-N-acetylmuramoyl-pentapeptide-transferase from Erwinia tasmaniensis (strain DSM 17950 / CFBP 7177 / CIP 109463 / NCPPB 4357 / Et1/99).